Here is a 362-residue protein sequence, read N- to C-terminus: Neutral protease 2 homolog MEP2 (362 aa).

Positions 1-19 (MLFPSIVAALAALANPVLS) are cleaved as a signal peptide. Residues 20–177 (LTIPQATGSE…SKAINPISAR (158 aa)) constitute a propeptide that is removed on maturation. 2 disulfide bridges follow: cysteine 184–cysteine 255 and cysteine 262–cysteine 280. Histidine 304 is a binding site for Zn(2+). Glutamate 305 is a catalytic residue. Zn(2+) contacts are provided by histidine 308 and aspartate 319.

Belongs to the peptidase M35 family. Zn(2+) serves as cofactor.

The protein localises to the secreted. The enzyme catalyses Preferential cleavage of bonds with hydrophobic residues in P1'. Also 3-Asn-|-Gln-4 and 8-Gly-|-Ser-9 bonds in insulin B chain.. In terms of biological role, secreted metalloproteinase that allows assimilation of proteinaceous substrates. Shows high activities on basic nuclear substrates such as histone and protamine. May be involved in virulence. The protein is Neutral protease 2 homolog MEP2 (MEP2) of Coccidioides posadasii (strain C735) (Valley fever fungus).